The primary structure comprises 177 residues: Probasin (177 aa).

The first 17 residues, Met1–Ser17, serve as a signal peptide directing secretion. A disulfide bond links Cys79 and Cys170.

This sequence belongs to the calycin superfamily. Lipocalin family. As to expression, prostatic epithelial cells.

The protein localises to the nucleus. The protein resides in the secreted. This chain is Probasin (Pbsn), found in Rattus norvegicus (Rat).